Here is a 360-residue protein sequence, read N- to C-terminus: Geranylgeranyl pyrophosphate synthase 9, chloroplastic (360 aa).

The transit peptide at 1–39 (MATTVHLSSSSLFSQSRGRRDNSISSVKSLRKRTVLSLS) directs the protein to the chloroplast. Lys106, Arg109, and His138 together coordinate isopentenyl diphosphate. Residues Asp145 and Asp151 each coordinate Mg(2+). A dimethylallyl diphosphate-binding site is contributed by Arg156. Position 157 (Arg157) interacts with isopentenyl diphosphate. The dimethylallyl diphosphate site is built by Lys245, Thr246, Gln283, Lys300, and Lys310.

The protein belongs to the FPP/GGPP synthase family. Monomer. No interactions with GGR. Requires Mg(2+) as cofactor.

The protein resides in the plastid. The protein localises to the chloroplast. It catalyses the reaction isopentenyl diphosphate + dimethylallyl diphosphate = (2E)-geranyl diphosphate + diphosphate. It carries out the reaction isopentenyl diphosphate + (2E)-geranyl diphosphate = (2E,6E)-farnesyl diphosphate + diphosphate. The enzyme catalyses isopentenyl diphosphate + (2E,6E)-farnesyl diphosphate = (2E,6E,10E)-geranylgeranyl diphosphate + diphosphate. Its pathway is isoprenoid biosynthesis; farnesyl diphosphate biosynthesis; farnesyl diphosphate from geranyl diphosphate and isopentenyl diphosphate: step 1/1. It functions in the pathway isoprenoid biosynthesis; geranyl diphosphate biosynthesis; geranyl diphosphate from dimethylallyl diphosphate and isopentenyl diphosphate: step 1/1. It participates in isoprenoid biosynthesis; geranylgeranyl diphosphate biosynthesis; geranylgeranyl diphosphate from farnesyl diphosphate and isopentenyl diphosphate: step 1/1. Catalyzes the trans-addition of the three molecules of IPP onto DMAPP to form geranylgeranyl pyrophosphate. This is Geranylgeranyl pyrophosphate synthase 9, chloroplastic (GGPPS9) from Arabidopsis thaliana (Mouse-ear cress).